A 307-amino-acid chain; its full sequence is Ribosomal protein L11 methyltransferase (307 aa).

Residues Thr-156, Gly-177, Asp-199, and Asn-243 each coordinate S-adenosyl-L-methionine.

The protein belongs to the methyltransferase superfamily. PrmA family.

The protein resides in the cytoplasm. It carries out the reaction L-lysyl-[protein] + 3 S-adenosyl-L-methionine = N(6),N(6),N(6)-trimethyl-L-lysyl-[protein] + 3 S-adenosyl-L-homocysteine + 3 H(+). Methylates ribosomal protein L11. This chain is Ribosomal protein L11 methyltransferase, found in Syntrophomonas wolfei subsp. wolfei (strain DSM 2245B / Goettingen).